A 274-amino-acid polypeptide reads, in one-letter code: Large ribosomal subunit protein uL2 (274 aa).

Residues 221 to 254 (RGTAMNPADHPHGGGEGRTFGKHPVSPWGLPTKG) form a disordered region.

This sequence belongs to the universal ribosomal protein uL2 family. In terms of assembly, part of the 50S ribosomal subunit. Forms a bridge to the 30S subunit in the 70S ribosome.

In terms of biological role, one of the primary rRNA binding proteins. Required for association of the 30S and 50S subunits to form the 70S ribosome, for tRNA binding and peptide bond formation. It has been suggested to have peptidyltransferase activity; this is somewhat controversial. Makes several contacts with the 16S rRNA in the 70S ribosome. This is Large ribosomal subunit protein uL2 from Sulfurihydrogenibium sp. (strain YO3AOP1).